Consider the following 194-residue polypeptide: Ribosome maturation factor RimP (194 aa).

This sequence belongs to the RimP family.

It is found in the cytoplasm. In terms of biological role, required for maturation of 30S ribosomal subunits. The protein is Ribosome maturation factor RimP of Jannaschia sp. (strain CCS1).